The chain runs to 207 residues: Ribosomal RNA small subunit methyltransferase G (207 aa).

S-adenosyl-L-methionine is bound by residues Gly74, Leu79, 125-126 (VE), and Arg140.

The protein belongs to the methyltransferase superfamily. RNA methyltransferase RsmG family.

It localises to the cytoplasm. It carries out the reaction guanosine(527) in 16S rRNA + S-adenosyl-L-methionine = N(7)-methylguanosine(527) in 16S rRNA + S-adenosyl-L-homocysteine. Specifically methylates the N7 position of guanine in position 527 of 16S rRNA. The polypeptide is Ribosomal RNA small subunit methyltransferase G (Shewanella pealeana (strain ATCC 700345 / ANG-SQ1)).